Consider the following 116-residue polypeptide: Putative pterin-4-alpha-carbinolamine dehydratase (116 aa).

This sequence belongs to the pterin-4-alpha-carbinolamine dehydratase family.

It carries out the reaction (4aS,6R)-4a-hydroxy-L-erythro-5,6,7,8-tetrahydrobiopterin = (6R)-L-erythro-6,7-dihydrobiopterin + H2O. This is Putative pterin-4-alpha-carbinolamine dehydratase from Xylella fastidiosa (strain 9a5c).